The primary structure comprises 201 residues: Recombination protein RecR (201 aa).

The segment at 60-75 adopts a C4-type zinc-finger fold; the sequence is CRRCGNVDVCDPCTIC. In terms of domain architecture, Toprim spans 83-178; the sequence is RTLVVVADVG…RVTRLAQGVP (96 aa).

The protein belongs to the RecR family.

May play a role in DNA repair. It seems to be involved in an RecBC-independent recombinational process of DNA repair. It may act with RecF and RecO. The sequence is that of Recombination protein RecR from Xanthobacter autotrophicus (strain ATCC BAA-1158 / Py2).